Reading from the N-terminus, the 134-residue chain is Small ribosomal subunit protein uS11 (134 aa).

Belongs to the universal ribosomal protein uS11 family. In terms of assembly, part of the 30S ribosomal subunit. Interacts with proteins S7 and S18. Binds to IF-3.

Functionally, located on the platform of the 30S subunit, it bridges several disparate RNA helices of the 16S rRNA. Forms part of the Shine-Dalgarno cleft in the 70S ribosome. The sequence is that of Small ribosomal subunit protein uS11 from Polaromonas naphthalenivorans (strain CJ2).